Here is a 93-residue protein sequence, read N- to C-terminus: uncharacterized protein (93 aa).

The disordered stretch occupies residues 35–72; that stretch reads KSVPPPTPPKPVKKTPSPTLPKPSKQKQEPQVEVNEDR. Residues 60 to 72 are compositionally biased toward basic and acidic residues; it reads QKQEPQVEVNEDR.

This is an uncharacterized protein from Ostreid herpesvirus 1 (isolate France) (OsHV-1).